The primary structure comprises 229 residues: Uracil-DNA glycosylase (229 aa).

The Proton acceptor role is filled by Asp-67.

Belongs to the uracil-DNA glycosylase (UDG) superfamily. UNG family.

It localises to the cytoplasm. It carries out the reaction Hydrolyzes single-stranded DNA or mismatched double-stranded DNA and polynucleotides, releasing free uracil.. Excises uracil residues from the DNA which can arise as a result of misincorporation of dUMP residues by DNA polymerase or due to deamination of cytosine. The chain is Uracil-DNA glycosylase from Coxiella burnetii (strain CbuG_Q212) (Coxiella burnetii (strain Q212)).